The following is a 221-amino-acid chain: MALYCRDTLIIIFQKLTVADLARASCVCKVWNSVATEDDLVVSAFTAPWRIKELVGRPASVSFWRDNGIWKFAISHRICRGDSVTSLAVKYAVQVMDIKRLNNMMSDHGIYSRDRLLIPISNPEILANTTCYVELDKYAKREVAVLYLEGAPKREQPVPGTNQQSNLSADGKRRLIESLRRSMQVDDGTALYYLAIAEGDPRSALSEFSADLRWERQAGLN.

One can recognise an F-box domain in the interval 7 to 46 (DTLIIIFQKLTVADLARASCVCKVWNSVATEDDLVVSAFT). The region spanning 74–118 (ISHRICRGDSVTSLAVKYAVQVMDIKRLNNMMSDHGIYSRDRLLI) is the LysM domain.

In terms of assembly, part of a SCF (ASK-cullin-F-box) protein ligase complex. Interacts with SKP1A/ASK1, SKP1B/ASK2, ASK4, ASK11 and ASK13.

It functions in the pathway protein modification; protein ubiquitination. Functionally, component of SCF(ASK-cullin-F-box) E3 ubiquitin ligase complexes, which may mediate the ubiquitination and subsequent proteasomal degradation of target proteins. This Arabidopsis thaliana (Mouse-ear cress) protein is F-box protein At1g55000.